The following is a 614-amino-acid chain: Male-specific lethal 1 homolog (614 aa).

Disordered regions lie at residues 1 to 127 (MTMR…GCSP) and 147 to 217 (KEPT…GASS). Phosphoserine is present on residues Ser66 and Ser126. The span at 158–169 (GAASPAATASDP) shows a compositional bias: low complexity. A compositionally biased stretch (pro residues) spans 170 to 184 (AGPPPLPLPGPPPLA). Residues 185 to 194 (PTATAGTLAA) are compositionally biased toward low complexity. Ser205 bears the Phosphoserine mark. Residues 213–282 (SGASSQAACL…KDNEKERHKL (70 aa)) are a coiled coil. The segment at 223 to 237 (KQILLLQLDLIEQQQ) is interaction with MSL2. 2 stretches are compositionally biased toward basic and acidic residues: residues 272–281 (KKDNEKERHK) and 294–304 (TELSEKIKLEC). The disordered stretch occupies residues 272–420 (KKDNEKERHK…PKEKAFSSEI (149 aa)). Lys301 is covalently cross-linked (Glycyl lysine isopeptide (Lys-Gly) (interchain with G-Cter in SUMO2)). A Nuclear localization signal motif is present at residues 317–346 (PKPFSCGRSGKGHKRKSPFGSTERKTPVKK). At Lys353 the chain carries N6-acetyllysine. Glycyl lysine isopeptide (Lys-Gly) (interchain with G-Cter in SUMO2) cross-links involve residues Lys365 and Lys378. A compositionally biased stretch (basic and acidic residues) spans 376 to 392 (VCKRELRSQETPEKPRS). A Phosphoserine modification is found at Ser393. Residues 393 to 407 (SVDTPPRLSTPQKGP) show a composition bias toward polar residues. The residue at position 396 (Thr396) is a Phosphothreonine. At Ser442 the chain carries Phosphoserine. A PEHE domain is found at 472-591 (VLAVPSWRDH…LTPQNFELPW (120 aa)). The interaction with KAT8 HAT domain stretch occupies residues 496 to 514 (ENLDDSVFSKRHAKLELDE). The short motif at 505 to 519 (KRHAKLELDEKRRKR) is the Bipartite nuclear localization signal element. Residues 550 to 591 (EVTSFFPEPDDVESLMITPFLPVVAFGRPLPKLTPQNFELPW) are sufficient for interaction with MSL3 MRG domain.

This sequence belongs to the msl-1 family. Component of a multisubunit histone acetyltransferase complex (MSL) at least composed of the KAT8/MOF/MYST1, MSL1/hampin, MSL2 and MSL3. Forms a MSL heterotetrameric core with MSL2. Interacts (via PEHE domain) with KAT8 (via HAT domain) and MSL3 (via MRG domain); both interactions are direct. Directly interacts with NUPR1. Interacts with TP53BP1; this interaction may be required for MSL1 DNA repair activity, but not for histone acetyltransferase activity. Interacts with TTC4, ECM2 and PIHD1. Post-translationally, sumoylated with SUMO1.

Its subcellular location is the nucleus. The protein localises to the nucleoplasm. It is found in the nucleus speckle. Functionally, non-catalytic component of the MSL histone acetyltransferase complex, a multiprotein complex that mediates the majority of histone H4 acetylation at 'Lys-16' (H4K16ac), an epigenetic mark that prevents chromatin compaction. The MSL complex is required for chromosome stability and genome integrity by maintaining homeostatic levels of H4K16ac. The MSL complex is also involved in gene dosage by promoting up-regulation of genes expressed by the X chromosome. X up-regulation is required to compensate for autosomal biallelic expression. The MSL complex also participates in gene dosage compensation by promoting expression of Tsix non-coding RNA. Within the MSL complex, acts as a scaffold to tether MSL3 and KAT8 together for enzymatic activity regulation. Greatly enhances MSL2 E3 ubiquitin ligase activity, promoting monoubiquitination of histone H2B at 'Lys-34' (H2BK34Ub). This modification in turn stimulates histone H3 methylation at 'Lys-4' (H3K4me) and 'Lys-79' (H3K79me) and leads to gene activation, including that of HOXA9 and MEIS1. This chain is Male-specific lethal 1 homolog, found in Homo sapiens (Human).